The chain runs to 338 residues: D-erythrose-4-phosphate dehydrogenase (338 aa).

11–12 provides a ligand contact to NAD(+); it reads RI. Substrate contacts are provided by residues 153-155, R199, 212-213, and R235; these read SCT and TK. C154 (nucleophile) is an active-site residue. Residue N317 coordinates NAD(+).

This sequence belongs to the glyceraldehyde-3-phosphate dehydrogenase family. Epd subfamily. Homotetramer.

It is found in the cytoplasm. It catalyses the reaction D-erythrose 4-phosphate + NAD(+) + H2O = 4-phospho-D-erythronate + NADH + 2 H(+). Its pathway is cofactor biosynthesis; pyridoxine 5'-phosphate biosynthesis; pyridoxine 5'-phosphate from D-erythrose 4-phosphate: step 1/5. Functionally, catalyzes the NAD-dependent conversion of D-erythrose 4-phosphate to 4-phosphoerythronate. This is D-erythrose-4-phosphate dehydrogenase from Shewanella amazonensis (strain ATCC BAA-1098 / SB2B).